A 225-amino-acid polypeptide reads, in one-letter code: Ribosomal RNA small subunit methyltransferase G (225 aa).

Residues Gly62, 113 to 114 (AE), and Lys130 each bind S-adenosyl-L-methionine.

This sequence belongs to the methyltransferase superfamily. RNA methyltransferase RsmG family.

It is found in the cytoplasm. Its function is as follows. Specifically methylates the N7 position of a guanine in 16S rRNA. In Petrotoga mobilis (strain DSM 10674 / SJ95), this protein is Ribosomal RNA small subunit methyltransferase G.